We begin with the raw amino-acid sequence, 24 residues long: Glutamate dehydrogenase (24 aa).

The protein belongs to the Glu/Leu/Phe/Val dehydrogenases family. As to quaternary structure, homohexamer.

The protein localises to the cytoplasm. It carries out the reaction L-glutamate + NAD(+) + H2O = 2-oxoglutarate + NH4(+) + NADH + H(+). The catalysed reaction is L-glutamate + NADP(+) + H2O = 2-oxoglutarate + NH4(+) + NADPH + H(+). This chain is Glutamate dehydrogenase (gdhA), found in Pyrococcus woesei.